Consider the following 265-residue polypeptide: Glycosylphosphatidylinositol anchor biosynthesis protein 11 (265 aa).

A run of 2 helical transmembrane segments spans residues 49-69 (LLVVPFHNIFILVGMFYSGLT) and 79-99 (GFLTSIPIQVIYNYIIYINLL). Residues N111 and N112 are each glycosylated (N-linked (GlcNAc...) asparagine). The next 4 membrane-spanning stretches (helical) occupy residues 137-157 (IFVSIVLSLPLFVVIILMGAP), 166-186 (LYLSLHLSQLIFNPLIILSNL), 209-229 (ILSSVLLTLGGCWLGVIPIPL), and 240-260 (ITLLVGGYLGGVVGGVLSLIV).

It belongs to the PIGF family.

It is found in the endoplasmic reticulum membrane. It functions in the pathway glycolipid biosynthesis; glycosylphosphatidylinositol-anchor biosynthesis. Functionally, acts in the GPI biosynthetic pathway between GlcNAc-PI synthesis and GPI transfer to protein. In Candida albicans (strain SC5314 / ATCC MYA-2876) (Yeast), this protein is Glycosylphosphatidylinositol anchor biosynthesis protein 11 (GPI11).